We begin with the raw amino-acid sequence, 555 residues long: 2-succinyl-5-enolpyruvyl-6-hydroxy-3-cyclohexene-1-carboxylate synthase (555 aa).

Belongs to the TPP enzyme family. MenD subfamily. Homodimer. It depends on Mg(2+) as a cofactor. Mn(2+) serves as cofactor. Thiamine diphosphate is required as a cofactor.

It carries out the reaction isochorismate + 2-oxoglutarate + H(+) = 5-enolpyruvoyl-6-hydroxy-2-succinyl-cyclohex-3-ene-1-carboxylate + CO2. It functions in the pathway quinol/quinone metabolism; 1,4-dihydroxy-2-naphthoate biosynthesis; 1,4-dihydroxy-2-naphthoate from chorismate: step 2/7. It participates in quinol/quinone metabolism; menaquinone biosynthesis. Catalyzes the thiamine diphosphate-dependent decarboxylation of 2-oxoglutarate and the subsequent addition of the resulting succinic semialdehyde-thiamine pyrophosphate anion to isochorismate to yield 2-succinyl-5-enolpyruvyl-6-hydroxy-3-cyclohexene-1-carboxylate (SEPHCHC). The sequence is that of 2-succinyl-5-enolpyruvyl-6-hydroxy-3-cyclohexene-1-carboxylate synthase from Bacteroides fragilis (strain ATCC 25285 / DSM 2151 / CCUG 4856 / JCM 11019 / LMG 10263 / NCTC 9343 / Onslow / VPI 2553 / EN-2).